The following is a 150-amino-acid chain: Large ribosomal subunit protein uL15 (150 aa).

Residues 1–13 (MADNDAIKVHDLR) show a composition bias toward basic and acidic residues. Residues 1-44 (MADNDAIKVHDLRPAPGAKTAKTRVGRGEASKGKTAGRGTKGTK) form a disordered region.

This sequence belongs to the universal ribosomal protein uL15 family. Part of the 50S ribosomal subunit.

Its function is as follows. Binds to the 23S rRNA. This chain is Large ribosomal subunit protein uL15, found in Micrococcus luteus (strain ATCC 4698 / DSM 20030 / JCM 1464 / CCM 169 / CCUG 5858 / IAM 1056 / NBRC 3333 / NCIMB 9278 / NCTC 2665 / VKM Ac-2230) (Micrococcus lysodeikticus).